The sequence spans 185 residues: Nuclear transcription factor Y subunit B-3 (185 aa).

A compositionally biased stretch (gly residues) spans 1–36 (MADGPGSPGGGGGSHESGSPRGGGGGGGGGGGGGGV). The tract at residues 1 to 39 (MADGPGSPGGGGGSHESGSPRGGGGGGGGGGGGGGVREQ) is disordered. Residues 43–49 (LPIANIS) mediate DNA binding. Residues 70–81 (VQECVSEFISFI) form a subunit association domain (SAD) region. A disordered region spans residues 145-164 (KDVLGSHGGSSSSAQGMGQQ). A compositionally biased stretch (low complexity) spans 153-164 (GSSSSAQGMGQQ).

Belongs to the NFYB/HAP3 subunit family. Heterotrimeric transcription factor composed of three components, NF-YA, NF-YB and NF-YC. NF-YB and NF-YC must interact and dimerize for NF-YA association and DNA binding. In terms of tissue distribution, ubiquitous.

It localises to the nucleus. Component of the NF-Y/HAP transcription factor complex. The NF-Y complex stimulates the transcription of various genes by recognizing and binding to a CCAAT motif in promoters. May regulate the expression of photosynthetic genes, and may be involved in chloroplast and amyloplast development. The protein is Nuclear transcription factor Y subunit B-3 (NFYB3) of Oryza sativa subsp. japonica (Rice).